The chain runs to 437 residues: GTPase Der (437 aa).

EngA-type G domains follow at residues 4–167 (PVIA…PEDE) and 176–351 (IRIS…ENHN). Residues 10–17 (GRPNVGKS), 57–61 (DTGGI), 119–122 (NKID), 182–189 (GRPNVGKS), 229–233 (DTAGM), and 294–297 (NKWD) contribute to the GTP site. Positions 352–436 (LRVPTHVLND…PIKIIARKKN (85 aa)) constitute a KH-like domain.

It belongs to the TRAFAC class TrmE-Era-EngA-EngB-Septin-like GTPase superfamily. EngA (Der) GTPase family. In terms of assembly, associates with the 50S ribosomal subunit.

In terms of biological role, GTPase that plays an essential role in the late steps of ribosome biogenesis. The polypeptide is GTPase Der (Halalkalibacterium halodurans (strain ATCC BAA-125 / DSM 18197 / FERM 7344 / JCM 9153 / C-125) (Bacillus halodurans)).